A 237-amino-acid polypeptide reads, in one-letter code: Orotidine 5'-phosphate decarboxylase (237 aa).

Substrate-binding positions include Asp11, Lys34, 61-70 (DLKLHDIPNT), Thr124, Arg186, Gln195, Gly215, and Arg216. Residue Lys63 is the Proton donor of the active site.

It belongs to the OMP decarboxylase family. Type 1 subfamily. In terms of assembly, homodimer.

It carries out the reaction orotidine 5'-phosphate + H(+) = UMP + CO2. It functions in the pathway pyrimidine metabolism; UMP biosynthesis via de novo pathway; UMP from orotate: step 2/2. In terms of biological role, catalyzes the decarboxylation of orotidine 5'-monophosphate (OMP) to uridine 5'-monophosphate (UMP). The protein is Orotidine 5'-phosphate decarboxylase of Lactococcus lactis subsp. lactis (strain IL1403) (Streptococcus lactis).